The following is an 81-amino-acid chain: ATP synthase subunit c, chloroplastic (81 aa).

Helical transmembrane passes span 3 to 23 (PLIS…ASIG) and 57 to 77 (LAFM…LLFA).

It belongs to the ATPase C chain family. In terms of assembly, F-type ATPases have 2 components, F(1) - the catalytic core - and F(0) - the membrane proton channel. F(1) has five subunits: alpha(3), beta(3), gamma(1), delta(1), epsilon(1). F(0) has four main subunits: a(1), b(1), b'(1) and c(10-14). The alpha and beta chains form an alternating ring which encloses part of the gamma chain. F(1) is attached to F(0) by a central stalk formed by the gamma and epsilon chains, while a peripheral stalk is formed by the delta, b and b' chains.

It localises to the plastid. The protein localises to the chloroplast thylakoid membrane. Its function is as follows. F(1)F(0) ATP synthase produces ATP from ADP in the presence of a proton or sodium gradient. F-type ATPases consist of two structural domains, F(1) containing the extramembraneous catalytic core and F(0) containing the membrane proton channel, linked together by a central stalk and a peripheral stalk. During catalysis, ATP synthesis in the catalytic domain of F(1) is coupled via a rotary mechanism of the central stalk subunits to proton translocation. Key component of the F(0) channel; it plays a direct role in translocation across the membrane. A homomeric c-ring of between 10-14 subunits forms the central stalk rotor element with the F(1) delta and epsilon subunits. This chain is ATP synthase subunit c, chloroplastic, found in Ipomoea purpurea (Common morning glory).